Consider the following 116-residue polypeptide: Early 4 ORF3 protein (116 aa).

It belongs to the adenoviridae E4 ORF3 family. As to quaternary structure, homodimer. Multimerizes through C-terminus tail by reciprocal or nonreciprocal interactions. Interacts with host PML isoform 2 C-terminal disordered region. Interacts with E1B-55k; this interaction is necessary for E1B 55 kDa protein to localize to the nuclear matrix fraction of the cell. May interact with host TRIM24, CREBBP, EP300, PRKDC and the MRN complex MRE11/RAD50/NBS1; these interactions may happen through nuclear bodies complexes.

It is found in the host nucleus. Its function is as follows. Forms a multivalent network in host nucleus that inhibits nuclear bodies and prevents antiviral cellular activities. The network is made of multimerized dimers and surrounds adenovirus replication centers and nucleolus. Plays a role in splicing of the major late transcript. Prevents viral genome concatemer formation. This Human adenovirus C serotype 2 (HAdV-2) protein is Early 4 ORF3 protein.